Here is a 754-residue protein sequence, read N- to C-terminus: Lysyl oxidase homolog 3 (754 aa).

The first 26 residues, 1–26, serve as a signal peptide directing secretion; that stretch reads MRAVSVWYCCPWGLLLLHCLCSFSVG. 4 consecutive SRCR domains span residues 45–146, 170–283, 308–408, and 418–526; these read FRLA…VICK, VRLR…VSCV, VRLK…VRCN, and IRLS…VICS. Disulfide bonds link Cys-71–Cys-135, Cys-84–Cys-145, Cys-115–Cys-125, Cys-202–Cys-272, Cys-215–Cys-282, Cys-249–Cys-259, Cys-333–Cys-397, Cys-346–Cys-407, Cys-377–Cys-387, Cys-447–Cys-512, Cys-460–Cys-525, Cys-493–Cys-503, Cys-555–Cys-561, Cys-607–Cys-655, Cys-639–Cys-645, Cys-667–Cys-677, and Cys-714–Cys-728. Asn-112 is a glycosylation site (N-linked (GlcNAc...) asparagine). The N-linked (GlcNAc...) asparagine glycan is linked to Asn-267. N-linked (GlcNAc...) asparagine glycosylation is found at Asn-391 and Asn-482. The lysyl-oxidase like stretch occupies residues 530 to 733; that stretch reads SDLLLHSALV…WVHNCHIGDA (204 aa). The Cu cation site is built by His-608, His-610, and His-612. N-linked (GlcNAc...) asparagine glycosylation occurs at Asn-626. A cross-link (lysine tyrosylquinone (Lys-Tyr)) is located at residues 635–671; sequence KASFCLEDTECQEDVSKRYECANFGEQGITVGCWDLY. Tyr-671 bears the 2',4',5'-topaquinone mark.

This sequence belongs to the lysyl oxidase family. The cofactor is Cu cation. Requires lysine tyrosylquinone residue as cofactor. Post-translationally, the lysine tyrosylquinone cross-link (LTQ) is generated by condensation of the epsilon-amino group of a lysine with a topaquinone produced by oxidation of tyrosine. In terms of tissue distribution, expressed in palate: predominantly present in the palate mesenchyme and tongue (at protein level). In spine, expressed in the original intervertebral disk, cartilage primordia, anterior and posterior longitudinal ligaments, meninges of spinal cord, lung and heart. In eyes, strongly expressed in the skin of the eyelid and weakly expressed in the cornea and sclera. In lung, predominantly expressed in the pulmonary mesenchyme. In developing muscle, expressed at myofiber ends (at protein level).

Its subcellular location is the secreted. It is found in the extracellular space. The protein localises to the cytoplasm. The protein resides in the nucleus. It catalyses the reaction L-lysyl-[protein] + O2 + H2O = (S)-2-amino-6-oxohexanoyl-[protein] + H2O2 + NH4(+). The catalysed reaction is N(6)-acetyl-L-lysyl-[protein] + O2 + H2O = acetamide + (S)-2-amino-6-oxohexanoyl-[protein] + H2O2. Its function is as follows. Protein-lysine 6-oxidase that mediates the oxidation of peptidyl lysine residues to allysine in target proteins. Catalyzes the post-translational oxidative deamination of peptidyl lysine residues in precursors of elastin and different types of collagens, a prerequisite in the formation of cross-links between collagens and elastin. Required for somite boundary formation by catalyzing oxidation of fibronectin (FN1), enhancing integrin signaling in myofibers and their adhesion to the myotendinous junction (MTJ). Acts as a regulator of inflammatory response by inhibiting differentiation of naive CD4(+) T-cells into T-helper Th17 or regulatory T-cells (Treg): acts by interacting with STAT3 in the nucleus and catalyzing both deacetylation and oxidation of lysine residues on STAT3, leading to disrupt STAT3 dimerization and inhibit STAT3 transcription activity. Oxidation of lysine residues to allysine on STAT3 preferentially takes place on lysine residues that are acetylated. Also able to catalyze deacetylation of lysine residues on STAT3. In Mus musculus (Mouse), this protein is Lysyl oxidase homolog 3.